The following is a 314-amino-acid chain: 4-hydroxy-3-methylbut-2-enyl diphosphate reductase (314 aa).

Cys12 lines the [4Fe-4S] cluster pocket. (2E)-4-hydroxy-3-methylbut-2-enyl diphosphate is bound by residues His41 and His74. Residues His41 and His74 each coordinate dimethylallyl diphosphate. Isopentenyl diphosphate is bound by residues His41 and His74. Cys96 provides a ligand contact to [4Fe-4S] cluster. Position 124 (His124) interacts with (2E)-4-hydroxy-3-methylbut-2-enyl diphosphate. His124 serves as a coordination point for dimethylallyl diphosphate. Residue His124 coordinates isopentenyl diphosphate. The active-site Proton donor is Glu126. Residue Thr167 participates in (2E)-4-hydroxy-3-methylbut-2-enyl diphosphate binding. Cys197 contacts [4Fe-4S] cluster. (2E)-4-hydroxy-3-methylbut-2-enyl diphosphate-binding residues include Ser225, Ser226, Asn227, and Ser269. The dimethylallyl diphosphate site is built by Ser225, Ser226, Asn227, and Ser269. The isopentenyl diphosphate site is built by Ser225, Ser226, Asn227, and Ser269.

It belongs to the IspH family. It depends on [4Fe-4S] cluster as a cofactor.

It catalyses the reaction isopentenyl diphosphate + 2 oxidized [2Fe-2S]-[ferredoxin] + H2O = (2E)-4-hydroxy-3-methylbut-2-enyl diphosphate + 2 reduced [2Fe-2S]-[ferredoxin] + 2 H(+). It carries out the reaction dimethylallyl diphosphate + 2 oxidized [2Fe-2S]-[ferredoxin] + H2O = (2E)-4-hydroxy-3-methylbut-2-enyl diphosphate + 2 reduced [2Fe-2S]-[ferredoxin] + 2 H(+). It functions in the pathway isoprenoid biosynthesis; dimethylallyl diphosphate biosynthesis; dimethylallyl diphosphate from (2E)-4-hydroxy-3-methylbutenyl diphosphate: step 1/1. The protein operates within isoprenoid biosynthesis; isopentenyl diphosphate biosynthesis via DXP pathway; isopentenyl diphosphate from 1-deoxy-D-xylulose 5-phosphate: step 6/6. Its function is as follows. Catalyzes the conversion of 1-hydroxy-2-methyl-2-(E)-butenyl 4-diphosphate (HMBPP) into a mixture of isopentenyl diphosphate (IPP) and dimethylallyl diphosphate (DMAPP). Acts in the terminal step of the DOXP/MEP pathway for isoprenoid precursor biosynthesis. In Pseudoalteromonas atlantica (strain T6c / ATCC BAA-1087), this protein is 4-hydroxy-3-methylbut-2-enyl diphosphate reductase.